The sequence spans 459 residues: tRNA modification GTPase MnmE (459 aa).

The (6S)-5-formyl-5,6,7,8-tetrahydrofolate site is built by R22, E85, and R124. One can recognise a TrmE-type G domain in the interval 221 to 380 (GLSTVIVGKP…LEIQIRDLFF (160 aa)). N231 serves as a coordination point for K(+). Residues 231 to 236 (NVGKSS), 250 to 256 (TEVAGTT), and 275 to 278 (DTAG) contribute to the GTP site. S235 is a Mg(2+) binding site. K(+) contacts are provided by T250, V252, and T255. T256 contributes to the Mg(2+) binding site. Position 459 (K459) interacts with (6S)-5-formyl-5,6,7,8-tetrahydrofolate.

Belongs to the TRAFAC class TrmE-Era-EngA-EngB-Septin-like GTPase superfamily. TrmE GTPase family. Homodimer. Heterotetramer of two MnmE and two MnmG subunits. Requires K(+) as cofactor.

Its subcellular location is the cytoplasm. Its function is as follows. Exhibits a very high intrinsic GTPase hydrolysis rate. Involved in the addition of a carboxymethylaminomethyl (cmnm) group at the wobble position (U34) of certain tRNAs, forming tRNA-cmnm(5)s(2)U34. This is tRNA modification GTPase MnmE from Staphylococcus aureus (strain MW2).